An 850-amino-acid chain; its full sequence is Depolymerase, capsule KN4-specific (850 aa).

It in the N-terminal section; belongs to the Teseptimavirus fiber family. In terms of assembly, homotrimer.

It localises to the virion. Functions as a receptor binding protein (RBP) and probably mediates the attachment to the host capsular exopolysaccharides. Displays a depolymerase activity that specifically degrades the KN4-type polysaccharides of Klebsiella pneumoniae capsule, which allows the phage to reach the host cell membrane and bind the entry receptor. This is Depolymerase, capsule KN4-specific from Klebsiella pneumoniae (Bacteriophage KN4-1).